A 94-amino-acid polypeptide reads, in one-letter code: Trp operon repressor homolog (94 aa).

A DNA-binding region spans residues 58–81 (QREIAEKYGVSIAQITRGSNALKG).

It belongs to the TrpR family. In terms of assembly, homodimer.

It is found in the cytoplasm. This protein is an aporepressor. When complexed with L-tryptophan it binds the operator region of the trp operon and prevents the initiation of transcription. This Chlamydia trachomatis serovar L2 (strain ATCC VR-902B / DSM 19102 / 434/Bu) protein is Trp operon repressor homolog.